A 446-amino-acid polypeptide reads, in one-letter code: MNGHFKIIIRDNFINNDENNYRDLHDLATNLYKLLCSKHCKISLSNLCIVKYYFDVPHINFYVSLTDGLIIYNDETYIRISHLYPEFCAMDNIIINNTNITNNTNIKMVKNKTQNPLEHFPKNQQSMNSTTNFIMSHANTLKEKTNIEPENRQKNISKNKIPKQFQNHIQKNNTFENKLEIISETLNPLNPLKSLQNSIQKQIPKQTQEQTQKQTQEQTQESSQNPHNEENYSLKIRQFRGDKLTFKYMKKDIDSGVLKPENINPMFSLKYMIFKILDSRLAIDFNSDQNIQQEYVLFNELFKECVDNNEDNKNNMDNEEDSDESDIESDSDLDDSKSQNIEIPYKYFYLPVEEKESIAKKYGLNVSEFEDKYINKSNNKIQSINQENSNTIFSESVKSDSNESKSIKPESIKSESIKSDNSNNHKNFGNTDFENNLLSLENYHTF.

3 disordered regions span residues 198 to 233, 309 to 337, and 394 to 431; these read SIQK…ENYS, NEDN…DDSK, and SESV…FGNT. Positions 199-224 are enriched in low complexity; that stretch reads IQKQIPKQTQEQTQKQTQEQTQESSQ. A compositionally biased stretch (acidic residues) spans 317–333; the sequence is DNEEDSDESDIESDSDL. The span at 397 to 418 shows a compositional bias: basic and acidic residues; sequence VKSDSNESKSIKPESIKSESIK.

This is an uncharacterized protein from Acanthamoeba polyphaga mimivirus (APMV).